Consider the following 268-residue polypeptide: Tryptophan synthase alpha chain (268 aa).

Catalysis depends on proton acceptor residues Glu49 and Asp60.

The protein belongs to the TrpA family. Tetramer of two alpha and two beta chains.

It carries out the reaction (1S,2R)-1-C-(indol-3-yl)glycerol 3-phosphate + L-serine = D-glyceraldehyde 3-phosphate + L-tryptophan + H2O. It participates in amino-acid biosynthesis; L-tryptophan biosynthesis; L-tryptophan from chorismate: step 5/5. Functionally, the alpha subunit is responsible for the aldol cleavage of indoleglycerol phosphate to indole and glyceraldehyde 3-phosphate. This Citrobacter koseri (strain ATCC BAA-895 / CDC 4225-83 / SGSC4696) protein is Tryptophan synthase alpha chain.